The primary structure comprises 258 residues: MILNRLSTLGIITFGMLSFAANSAQPDIKFASKEYGVTIGESRIIYPLDAAGVMVSVKNTQDYPVLIQSRIYDENKEKESEDPFVVTPPLFRLDAKQQNSLRIAQAGGVFPRDKESLKWLCVKGIPPKDEDIWVDDATNKQKFNPDKDVGVFVQFAINNCIKLLVRPNELKGTPIQFAENLSWKVDGGKLIAENPSPFYMNIGELTFGGKSIPSHYIPPKSTWAFDLPKGLAGARNVSWRIINDQGGLDRLYSKNVTL.

Residues Met1–Ala20 form the signal peptide. Cysteines 121 and 160 form a disulfide.

It belongs to the periplasmic pilus chaperone family.

It localises to the periplasm. Functionally, has a stimulatory role for the envelope antigen F1 secretion. It seems to interact with the subunit polypeptide and to prevent it from digestion by a protease. This chain is Chaperone protein caf1M (caf1M), found in Yersinia pestis.